The chain runs to 147 residues: NADH-quinone oxidoreductase subunit A (147 aa).

3 helical membrane passes run 16 to 36 (FAIFLIVAIGLCCLMLVGGWF), 68 to 88 (FYLVAMFFVIFDVEALYLFAW), and 97 to 117 (WVGFVEAAIFIFVLLAGLVYL).

It belongs to the complex I subunit 3 family. NDH-1 is composed of 13 different subunits. Subunits NuoA, H, J, K, L, M, N constitute the membrane sector of the complex.

Its subcellular location is the cell inner membrane. The catalysed reaction is a quinone + NADH + 5 H(+)(in) = a quinol + NAD(+) + 4 H(+)(out). NDH-1 shuttles electrons from NADH, via FMN and iron-sulfur (Fe-S) centers, to quinones in the respiratory chain. The immediate electron acceptor for the enzyme in this species is believed to be ubiquinone. Couples the redox reaction to proton translocation (for every two electrons transferred, four hydrogen ions are translocated across the cytoplasmic membrane), and thus conserves the redox energy in a proton gradient. This is NADH-quinone oxidoreductase subunit A from Salmonella paratyphi A (strain ATCC 9150 / SARB42).